The primary structure comprises 1347 residues: Protocadherin-11 X-linked (1347 aa).

The signal sequence occupies residues 1–23 (MDLLSGTYIFAVLLACVVFHSGA). Topologically, residues 24–812 (QEKNYTIREE…VSSPTSDYVK (789 aa)) are extracellular. Cadherin domains follow at residues 26 to 139 (KNYT…APLF), 140 to 249 (PATV…HPVF), 250 to 355 (KETE…VPSI), 362 to 466 (NPVN…APVF), 467 to 570 (TQSF…SPVF), 571 to 673 (THNE…KPVF), and 677 to 795 (PSNC…APVT). N-linked (GlcNAc...) asparagine glycans are attached at residues Asn-27, Asn-48, and Asn-54. Residue Asn-344 is glycosylated (N-linked (GlcNAc...) asparagine). A glycan (N-linked (GlcNAc...) asparagine) is linked at Asn-553. An N-linked (GlcNAc...) asparagine glycan is attached at Asn-773. The chain crosses the membrane as a helical span at residues 813–833 (ILVAAVAGTITVVVVIFITAV). The Cytoplasmic segment spans residues 834 to 1347 (VRCRQAPHLK…DSPIMEEHPL (514 aa)). Disordered regions lie at residues 1057–1091 (LPEG…GYPQ), 1097–1116 (RATP…ESTF), and 1326–1347 (FTPR…EHPL).

Expressed strongly in fetal brain and brain (cortex, amygdala, thalamus, substantia nigra, hippocampus, caudate nucleus and corpus callosum). Expressed at low level in testis.

The protein resides in the cell membrane. In terms of biological role, potential calcium-dependent cell-adhesion protein. The protein is Protocadherin-11 X-linked (PCDH11X) of Homo sapiens (Human).